Here is a 213-residue protein sequence, read N- to C-terminus: ATP-dependent Clp protease proteolytic subunit (213 aa).

Serine 114 functions as the Nucleophile in the catalytic mechanism. Histidine 139 is an active-site residue.

This sequence belongs to the peptidase S14 family. In terms of assembly, fourteen ClpP subunits assemble into 2 heptameric rings which stack back to back to give a disk-like structure with a central cavity, resembling the structure of eukaryotic proteasomes.

It is found in the cytoplasm. It carries out the reaction Hydrolysis of proteins to small peptides in the presence of ATP and magnesium. alpha-casein is the usual test substrate. In the absence of ATP, only oligopeptides shorter than five residues are hydrolyzed (such as succinyl-Leu-Tyr-|-NHMec, and Leu-Tyr-Leu-|-Tyr-Trp, in which cleavage of the -Tyr-|-Leu- and -Tyr-|-Trp bonds also occurs).. In terms of biological role, cleaves peptides in various proteins in a process that requires ATP hydrolysis. Has a chymotrypsin-like activity. Plays a major role in the degradation of misfolded proteins. This Pseudomonas entomophila (strain L48) protein is ATP-dependent Clp protease proteolytic subunit.